Reading from the N-terminus, the 239-residue chain is tRNA (guanine-N(1)-)-methyltransferase (239 aa).

S-adenosyl-L-methionine contacts are provided by residues glycine 108 and 128-133 (VGNFIV).

This sequence belongs to the RNA methyltransferase TrmD family. In terms of assembly, homodimer.

The protein localises to the cytoplasm. It catalyses the reaction guanosine(37) in tRNA + S-adenosyl-L-methionine = N(1)-methylguanosine(37) in tRNA + S-adenosyl-L-homocysteine + H(+). Its function is as follows. Specifically methylates guanosine-37 in various tRNAs. The protein is tRNA (guanine-N(1)-)-methyltransferase of Helicobacter hepaticus (strain ATCC 51449 / 3B1).